Consider the following 75-residue polypeptide: Conotoxin ar11a (75 aa).

Residues 1-19 (MKLCATFLLVLVTLPLVTG) form the signal peptide. Residues 20–36 (EKSSERSLSGAILRGVR) constitute a propeptide that is removed on maturation. 4 cysteine pairs are disulfide-bonded: Cys-39-Cys-53, Cys-46-Cys-58, Cys-52-Cys-63, and Cys-57-Cys-70.

In terms of tissue distribution, expressed by the venom duct.

It is found in the secreted. Functionally, both natural (L-Leu form) and synthetic (D-Leu from) peptides equally cause sensitivity to touch and body tremor. Neither L-Leu form nor D-Leu form is active on nerve-muscle preparation. In Conus arenatus (Sand-dusted cone), this protein is Conotoxin ar11a.